Reading from the N-terminus, the 405-residue chain is Subtilisin-like protease 6 (405 aa).

The signal sequence occupies residues 1 to 18 (FITKAIPIVLAALSAVNG). Positions 19–125 (AKILEAGPHA…VRTSTNGTNL (107 aa)) are excised as a propeptide. Positions 34–118 (KYIVVMKKDV…YIEPDFVVRT (85 aa)) constitute an Inhibitor I9 domain. Asn-121 and Asn-124 each carry an N-linked (GlcNAc...) asparagine glycan. Positions 133–405 (SWGLARVGSK…GEGTTGKLIY (273 aa)) constitute a Peptidase S8 domain. Catalysis depends on charge relay system residues Asp-165 and His-196. Residues Asn-250 and Asn-262 are each glycosylated (N-linked (GlcNAc...) asparagine). Ser-356 (charge relay system) is an active-site residue.

It belongs to the peptidase S8 family.

The protein localises to the secreted. Its function is as follows. Secreted subtilisin-like serine protease with keratinolytic activity that contributes to pathogenicity. The sequence is that of Subtilisin-like protease 6 (SUB6) from Trichophyton schoenleinii.